The primary structure comprises 308 residues: Low density lipoprotein receptor adapter protein 1 (308 aa).

An N-acetylmethionine modification is found at Met1. Position 14 is a phosphoserine (Ser14). Residues 41–195 (LLEGMVFSLK…QEGGDVPGTR (155 aa)) enclose the PID domain. The interval 179-201 (EKREKANQEGGDVPGTRRDSTPS) is disordered. Phosphoserine occurs at positions 198 and 201. The Clathrin box motif lies at 211-215 (LLDLE). Positions 248–275 (WELDDGLDEAFSRLAQSRTNPQVLDTGL) are AP-2 complex binding. The short motif at 256–265 (EAFSRLAQSR) is the [DE]-X(1,2)-F-X-X-[FL]-X-X-X-R motif element. The segment at 288–308 (PTDWDKPDSSGIDQDDDVFTF) is disordered.

As to quaternary structure, interacts (via PID domain) with LDLR (via NPXY motif). Binds to soluble clathrin trimers. Interacts with AP2B1; the interaction mediates the association with the AP-2 complex. Interacts with VLDLR. Interacts with LRP2.

It localises to the cytoplasm. In terms of biological role, adapter protein (clathrin-associated sorting protein (CLASP)) required for efficient endocytosis of the LDL receptor (LDLR) in polarized cells such as hepatocytes and lymphocytes, but not in non-polarized cells (fibroblasts). May be required for LDL binding and internalization but not for receptor clustering in coated pits. May facilitate the endocytosis of LDLR and LDLR-LDL complexes from coated pits by stabilizing the interaction between the receptor and the structural components of the pits. May also be involved in the internalization of other LDLR family members. Binds to phosphoinositides, which regulate clathrin bud assembly at the cell surface. Required for trafficking of LRP2 to the endocytic recycling compartment which is necessary for LRP2 proteolysis, releasing a tail fragment which translocates to the nucleus and mediates transcriptional repression. The polypeptide is Low density lipoprotein receptor adapter protein 1 (Mus musculus (Mouse)).